A 271-amino-acid polypeptide reads, in one-letter code: MDNFMEMTKKLGHQPELLRLRALDATYDDALEGKLVVAPLDMSEPGKKILDSGTADGTWLRNVRSKQSVPHDYYGSDVEGELFPKDPDGITYFAHSFKDPWPQQYLGFFDLVHIRGSLAGSAPEGPAPVIQNLTTLLKPGGWVQLMEMNAFSPPPNGPAMTDFAKMASEMFTGIGVGDFANNNKSMLEDAGLKNVQEKRVIVNLGKKAKPELHDQSIHGVTGPIVPLTSVARTVKSSFTGEQLDALPARVKEELETEGGQVEMIIAFGQKA.

It belongs to the methyltransferase superfamily. LaeA methyltransferase family.

It functions in the pathway secondary metabolite biosynthesis. Methyltransferase; part of the gene cluster that mediates the biosynthesis of pseurotin A, a competitive inhibitor of chitin synthase and an inducer of nerve-cell proliferation. The PKS-NRPS hybrid synthetase psoA is responsible for the biosynthesis of azaspirene, one of the first intermediates having the 1-oxa-7-azaspiro[4,4]-non-2-ene-4,6-dione core of pseurotin, via condensation of one acetyl-CoA, 4 malonyl-CoA, and a L-phenylalanine molecule. The dual-functional monooxygenase/methyltransferase psoF seems to be involved in the addition of the C3 methyl group onto the pseurotin scaffold. Azaspirene is then converted to synerazol through 4 steps including oxidation of C17 by the cytochrome P450 monooxygenase psoD, O-methylation of the hydroxy group of C8 by the methyltransferase psoC, and the trans-to-cis isomerization of the C13 olefin by the glutathione S-transferase psoE. The fourth step of synerazol production is performed by the dual-functional monooxygenase/methyltransferase psoF which seems to catalyze the epoxidation of the intermediate deepoxy-synerazol. Synerazol can be attacked by a water molecule nonenzymatically at two different positions to yield two diol products, pseurotin A and pseurotin D. The chain is Methyltransferase psoC from Aspergillus fumigatus (strain ATCC MYA-4609 / CBS 101355 / FGSC A1100 / Af293) (Neosartorya fumigata).